The primary structure comprises 146 residues: Large ribosomal subunit protein uL15 (146 aa).

The tract at residues 1–51 (MQLNTLKPAEGSKKNRRRVGRGIGSGLGKTAGRGHKGQKSRSGGFHKVGFE) is disordered. Positions 21-31 (RGIGSGLGKTA) are enriched in gly residues.

This sequence belongs to the universal ribosomal protein uL15 family. In terms of assembly, part of the 50S ribosomal subunit.

Binds to the 23S rRNA. The polypeptide is Large ribosomal subunit protein uL15 (Polynucleobacter asymbioticus (strain DSM 18221 / CIP 109841 / QLW-P1DMWA-1) (Polynucleobacter necessarius subsp. asymbioticus)).